The primary structure comprises 357 residues: CD4+ T-cell-stimulating antigen (357 aa).

A signal peptide spans 1–22 (MKKRTFALALSMIIASGVVLGA). A lipid anchor (N-palmitoyl cysteine) is attached at Cys23. Cys23 is lipidated: S-diacylglycerol cysteine.

Belongs to the BMP lipoprotein family.

Its subcellular location is the cell membrane. The polypeptide is CD4+ T-cell-stimulating antigen (tcsA) (Listeria innocua serovar 6a (strain ATCC BAA-680 / CLIP 11262)).